The primary structure comprises 230 residues: Thiamine-triphosphatase (230 aa).

Residue Ala-2 is modified to N-acetylalanine. Positions 5–201 (LIEVERKFLP…AKLIVYLQRF (197 aa)) constitute a CYTH domain. Mg(2+) contacts are provided by Glu-7 and Glu-9. The substrate site is built by Lys-11, Arg-55, Arg-57, Lys-65, and Arg-125. Positions 145, 157, and 159 each coordinate Mg(2+). Glu-157 contributes to the substrate binding site. Lys-193 is a binding site for substrate.

This sequence belongs to the ThTPase family. Monomer. The cofactor is Mg(2+).

The protein localises to the cytoplasm. It catalyses the reaction thiamine triphosphate + H2O = thiamine diphosphate + phosphate + H(+). Functionally, hydrolase highly specific for thiamine triphosphate (ThTP). This chain is Thiamine-triphosphatase (THTPA), found in Macaca fascicularis (Crab-eating macaque).